A 231-amino-acid chain; its full sequence is Ribosyldihydronicotinamide dehydrogenase [quinone] (231 aa).

FAD contacts are provided by residues His-12, 18–21 (FNGS), and 104–107 (LYWF). 127-129 (FDV) provides a ligand contact to substrate. Residues 148–151 (TTGG) and Tyr-156 each bind FAD. 2 residues coordinate Zn(2+): His-174 and His-178. Glu-194 contacts FAD. Ser-197 is subject to Phosphoserine. Arg-201 is an FAD binding site. Cys-223 contributes to the Zn(2+) binding site.

Belongs to the NAD(P)H dehydrogenase (quinone) family. Homodimer. It depends on Zn(2+) as a cofactor. FAD is required as a cofactor.

Its subcellular location is the cytoplasm. The catalysed reaction is 1-(beta-D-ribofuranosyl)-1,4-dihydronicotinamide + a quinone + H(+) = beta-nicotinamide D-riboside + a quinol. The enzyme apparently serves as a quinone reductase in connection with conjugation reactions of hydroquinones involved in detoxification pathways as well as in biosynthetic processes such as the vitamin K-dependent gamma-carboxylation of glutamate residues in prothrombin synthesis. The polypeptide is Ribosyldihydronicotinamide dehydrogenase [quinone] (Nqo2) (Rattus norvegicus (Rat)).